A 438-amino-acid polypeptide reads, in one-letter code: Xylose isomerase (438 aa).

Residues histidine 100 and aspartate 103 contribute to the active site. Mg(2+) contacts are provided by glutamate 231, glutamate 267, histidine 270, aspartate 295, aspartate 306, aspartate 308, and aspartate 338.

It belongs to the xylose isomerase family. As to quaternary structure, homotetramer. Mg(2+) serves as cofactor.

Its subcellular location is the cytoplasm. It catalyses the reaction alpha-D-xylose = alpha-D-xylulofuranose. This Pseudomonas syringae pv. tomato (strain ATCC BAA-871 / DC3000) protein is Xylose isomerase.